The following is an 87-amino-acid chain: Phosphocarrier protein HPr (87 aa).

Residues 1–87 (MASKDFHIVA…AETMTKEGLA (87 aa)) enclose the HPr domain. His-15 functions as the Pros-phosphohistidine intermediate in the catalytic mechanism. A Phosphoserine; by HPrK/P modification is found at Ser-46.

It belongs to the HPr family.

The protein resides in the cytoplasm. With respect to regulation, phosphorylation on Ser-46 inhibits the phosphoryl transfer from enzyme I to HPr. General (non sugar-specific) component of the phosphoenolpyruvate-dependent sugar phosphotransferase system (sugar PTS). This major carbohydrate active-transport system catalyzes the phosphorylation of incoming sugar substrates concomitantly with their translocation across the cell membrane. The phosphoryl group from phosphoenolpyruvate (PEP) is transferred to the phosphoryl carrier protein HPr by enzyme I. Phospho-HPr then transfers it to the PTS EIIA domain. Functionally, P-Ser-HPr interacts with the catabolite control protein A (CcpA), forming a complex that binds to DNA at the catabolite response elements cre, operator sites preceding a large number of catabolite-regulated genes. Thus, P-Ser-HPr is a corepressor in carbon catabolite repression (CCR), a mechanism that allows bacteria to coordinate and optimize the utilization of available carbon sources. P-Ser-HPr also plays a role in inducer exclusion, in which it probably interacts with several non-PTS permeases and inhibits their transport activity. The protein is Phosphocarrier protein HPr (ptsH) of Streptococcus salivarius.